The sequence spans 388 residues: Lipid-A-disaccharide synthase (388 aa).

This sequence belongs to the LpxB family.

It carries out the reaction a lipid X + a UDP-2-N,3-O-bis[(3R)-3-hydroxyacyl]-alpha-D-glucosamine = a lipid A disaccharide + UDP + H(+). It functions in the pathway bacterial outer membrane biogenesis; LPS lipid A biosynthesis. In terms of biological role, condensation of UDP-2,3-diacylglucosamine and 2,3-diacylglucosamine-1-phosphate to form lipid A disaccharide, a precursor of lipid A, a phosphorylated glycolipid that anchors the lipopolysaccharide to the outer membrane of the cell. This Burkholderia mallei (strain NCTC 10247) protein is Lipid-A-disaccharide synthase.